Consider the following 551-residue polypeptide: E-selectin (551 aa).

An N-terminal signal peptide occupies residues 1–23; sequence MVASWLLSTLTFALVLLIKETST. In terms of domain architecture, C-type lectin spans 24–141; it reads WTYHFSAENM…CSKKKLALCY (118 aa). Topologically, residues 24–495 are extracellular; sequence WTYHFSAENM…CEEPIASNVP (472 aa). 2 N-linked (GlcNAc...) asparagine glycosylation sites follow: Asn32 and Asn45. 17 cysteine pairs are disulfide-bonded: Cys42-Cys140, Cys113-Cys132, Cys145-Cys156, Cys150-Cys165, Cys167-Cys176, Cys182-Cys226, Cys195-Cys208, Cys212-Cys239, Cys244-Cys288, Cys257-Cys270, Cys274-Cys301, Cys306-Cys351, Cys337-Cys364, Cys369-Cys414, Cys400-Cys427, Cys432-Cys473, and Cys459-Cys486. Glu103, Asn105, and Glu111 together coordinate Ca(2+). Residues 103-111, 115-120, and 128-130 each bind a carbohydrate; these read EPNNKQNNE, EIYIKR, and NDE. Positions 128 and 129 each coordinate Ca(2+). The region spanning 142 to 177 is the EGF-like domain; sequence TAACTEASCSGHGECIETINNYSCKCYPGFSGLKCE. N-linked (GlcNAc...) asparagine glycosylation is present at Asn162. Sushi domains follow at residues 180–241, 242–303, 305–366, 368–429, and 430–488; these read VTCE…TCKV, VECD…TCKA, SCDT…VCEA, KCDP…SCQV, and VQCP…TCEE. N-linked (GlcNAc...) asparagine glycans are attached at residues Asn194, Asn201, and Asn205. Residue Asn267 is glycosylated (N-linked (GlcNAc...) asparagine). Asn314, Asn321, and Asn334 each carry an N-linked (GlcNAc...) asparagine glycan. N-linked (GlcNAc...) asparagine glycosylation is found at Asn442 and Asn466. The helical transmembrane segment at 496–517 threads the bilayer; sequence LAVGLSVSGTSFLTLTSFLLWF. Topologically, residues 518–551 are cytoplasmic; the sequence is LKYFRKKAKKFVPASSRYVGLEAHGNCQVPSHLI.

This sequence belongs to the selectin/LECAM family. As to quaternary structure, interacts with SELPLG/PSGL1 and PODXL2 through the sialyl Lewis X epitope. SELPLG sulfation appears not to be required for this interaction.

The protein localises to the cell membrane. In terms of biological role, cell-surface glycoprotein having a role in immunoadhesion. Mediates in the adhesion of blood neutrophils in cytokine-activated endothelium through interaction with SELPLG/PSGL1. May have a role in capillary morphogenesis. The protein is E-selectin (SELE) of Oryctolagus cuniculus (Rabbit).